The sequence spans 796 residues: Cation/H(+) antiporter 6B (796 aa).

13 consecutive transmembrane segments (helical) span residues 54-74 (DFWE…FLLW), 93-113 (SMML…IPCL), 131-151 (IGAF…DVGI), 159-179 (SVVI…LLYS), 194-213 (YTVM…NMLL), 223-243 (FGQI…FLTV), 259-279 (LAFM…LWVI), 285-305 (GAPV…LSYL), 310-330 (FLFF…NGPP), 344-364 (EGIF…WSFL), 382-402 (FSFL…AALA), 411-431 (IILG…VLTA), and 444-464 (LLGV…HFLY).

Belongs to the monovalent cation:proton antiporter 2 (CPA2) transporter (TC 2.A.37) family. CHX (TC 2.A.37.4) subfamily. As to expression, preferentially expressed in pollen.

The protein localises to the membrane. Its function is as follows. May operate as a cation/H(+) antiporter. This Arabidopsis thaliana (Mouse-ear cress) protein is Cation/H(+) antiporter 6B (CHX6b).